Reading from the N-terminus, the 612-residue chain is uncharacterized protein (612 aa).

5 disordered regions span residues 46–113 (QQPQ…MVTP), 129–185 (QQYQ…TPTY), 313–360 (TKDG…GSTM), 457–488 (FSIS…SGYG), and 593–612 (NNTN…VVTI). Over residues 58–102 (HQQIPISTQSTPNSTSSTTTTTTTTTSTTTAPTSNSKKSKTTPSN) the composition is skewed to low complexity. Composition is skewed to polar residues over residues 103–113 (GNKPTSGMVTP) and 129–138 (QQYQPNSQLQ). Positions 143–169 (IIKKSSLSTTPNNINNNNNNNNNTNTI) are enriched in low complexity. Over residues 175–185 (GGNNSAPTPTY) the composition is skewed to polar residues. Over residues 323–359 (TTSSTSTSSSATSTTSSSTSSTTTTSSTSNSSTPGST) the composition is skewed to low complexity.

This is an uncharacterized protein from Dictyostelium discoideum (Social amoeba).